A 286-amino-acid chain; its full sequence is B3 domain-containing protein REM11 (286 aa).

A DNA-binding region (TF-B3 1) is located at residues 1–70 (MAWNLAIITL…TPMLSLVSTQ (70 aa)). The interval 68–114 (STQSTSHKSQKRECSKHSEKESISAVPSKGKKNRKARSNREERRDSS) is disordered. Basic and acidic residues predominate over residues 78-89 (KRECSKHSEKES). Positions 119–219 (NRFVTFTPED…RAQVCFYGVF (101 aa)) form a DNA-binding region, TF-B3 2.

The protein resides in the nucleus. The protein is B3 domain-containing protein REM11 (REM11) of Arabidopsis thaliana (Mouse-ear cress).